We begin with the raw amino-acid sequence, 367 residues long: Ribosomal lysine N-methyltransferase 5 (367 aa).

The disordered stretch occupies residues 55–74; sequence EGGRKKKRVRRRNKASSVEE. Basic residues predominate over residues 58–68; it reads RKKKRVRRRNK. Residues Trp110, 170-172, Asp192, Trp256, and Met288 contribute to the S-adenosyl-L-methionine site; that span reads GAG.

This sequence belongs to the class I-like SAM-binding methyltransferase superfamily. RKM5 family.

Its function is as follows. S-adenosyl-L-methionine-dependent protein-lysine N-methyltransferase that monomethylates 60S ribosomal protein L1 (RPL1A and RPL1B) at 'Lys-46'. The chain is Ribosomal lysine N-methyltransferase 5 (RKM5) from Saccharomyces cerevisiae (strain AWRI796) (Baker's yeast).